A 335-amino-acid chain; its full sequence is Beta-ketoacyl-[acyl-carrier-protein] synthase III (335 aa).

Residues C119 and H261 contribute to the active site. The tract at residues 262–266 (QANQR) is ACP-binding. N291 is an active-site residue.

This sequence belongs to the thiolase-like superfamily. FabH family. As to quaternary structure, homodimer.

It is found in the cytoplasm. It carries out the reaction malonyl-[ACP] + acetyl-CoA + H(+) = 3-oxobutanoyl-[ACP] + CO2 + CoA. Its pathway is lipid metabolism; fatty acid biosynthesis. In terms of biological role, catalyzes the condensation reaction of fatty acid synthesis by the addition to an acyl acceptor of two carbons from malonyl-ACP. Catalyzes the first condensation reaction which initiates fatty acid synthesis and may therefore play a role in governing the total rate of fatty acid production. Possesses both acetoacetyl-ACP synthase and acetyl transacylase activities. Its substrate specificity determines the biosynthesis of branched-chain and/or straight-chain of fatty acids. This chain is Beta-ketoacyl-[acyl-carrier-protein] synthase III, found in Prochlorococcus marinus (strain MIT 9312).